The sequence spans 68 residues: Conotoxin Eb11.7 (68 aa).

An N-terminal signal peptide occupies residues 1–26 (MMFRLTSVSCFLLVIVCLNLFQVVLT). Cystine bridges form between cysteine 29-cysteine 43, cysteine 36-cysteine 48, cysteine 42-cysteine 52, and cysteine 47-cysteine 56. Phenylalanine 60 bears the Phenylalanine amide mark. A propeptide spanning residues 64 to 68 (ATFQE) is cleaved from the precursor.

It belongs to the conotoxin I2 superfamily. In terms of tissue distribution, expressed by the venom duct.

Its subcellular location is the secreted. In Conus eburneus (Ivory cone), this protein is Conotoxin Eb11.7.